The following is a 408-amino-acid chain: Aminoacylase-1 (408 aa).

Position 76 (H76) interacts with Zn(2+). D78 is an active-site residue. D109 lines the Zn(2+) pocket. Residue E143 is the Proton acceptor of the active site. 3 residues coordinate Zn(2+): E144, E172, and H379.

The protein belongs to the peptidase M20A family. In terms of assembly, homodimer. The cofactor is Zn(2+).

Its subcellular location is the cytoplasm. The catalysed reaction is an N-acyl-L-amino acid + H2O = an L-alpha-amino acid + a carboxylate. The enzyme catalyses an N-acetyl-L-cysteine-S-conjugate + H2O = an S-substituted L-cysteine + acetate. Involved in the hydrolysis of N-acylated or N-acetylated amino acids (except L-aspartate). The sequence is that of Aminoacylase-1 (acy1) from Dictyostelium discoideum (Social amoeba).